The chain runs to 370 residues: Polygalacturonase 1 (370 aa).

Positions 1 to 18 are cleaved as a signal peptide; that stretch reads MRTSILSMLALGAAAVSA. Residues C36 and C51 are joined by a disulfide bond. PbH1 repeat units lie at residues 163-194, 195-216, 217-237, 246-267, and 275-297; these read ADNLVLDHITIDNTDGDKTNGGHNTDAFDVGE, STYITISNANIKNQDDCLAINS, GENIIFTGGTCSGGHGLSIGS, VKNVTISDSTVSNSDNGIRIKT, and VADVTFSNIELSNIAKYGIVIEQ. The active-site Proton donor is D209. C211 and C227 are oxidised to a cystine. H231 is an active-site residue. N-linked (GlcNAc...) asparagine glycosylation is present at N248. 2 cysteine pairs are disulfide-bonded: C337/C342 and C361/C370.

This sequence belongs to the glycosyl hydrolase 28 family.

Its subcellular location is the secreted. The catalysed reaction is (1,4-alpha-D-galacturonosyl)n+m + H2O = (1,4-alpha-D-galacturonosyl)n + (1,4-alpha-D-galacturonosyl)m.. The chain is Polygalacturonase 1 (PG1) from Penicillium olsonii.